The primary structure comprises 55 residues: Large ribosomal subunit protein bL33 (55 aa).

The segment covering methionine 1–leucine 11 has biased composition (basic and acidic residues). Residues methionine 1–lysine 27 form a disordered region. The segment covering threonine 14–serine 24 has biased composition (polar residues).

This sequence belongs to the bacterial ribosomal protein bL33 family.

This is Large ribosomal subunit protein bL33 from Dechloromonas aromatica (strain RCB).